Consider the following 356-residue polypeptide: DNA polymerase IV (356 aa).

A UmuC domain is found at I6 to G187. The Mg(2+) site is built by D10 and D105. E106 is an active-site residue.

Belongs to the DNA polymerase type-Y family. In terms of assembly, monomer. The cofactor is Mg(2+).

The protein resides in the cytoplasm. It carries out the reaction DNA(n) + a 2'-deoxyribonucleoside 5'-triphosphate = DNA(n+1) + diphosphate. In terms of biological role, poorly processive, error-prone DNA polymerase involved in untargeted mutagenesis. Copies undamaged DNA at stalled replication forks, which arise in vivo from mismatched or misaligned primer ends. These misaligned primers can be extended by PolIV. Exhibits no 3'-5' exonuclease (proofreading) activity. May be involved in translesional synthesis, in conjunction with the beta clamp from PolIII. This is DNA polymerase IV from Staphylococcus epidermidis (strain ATCC 35984 / DSM 28319 / BCRC 17069 / CCUG 31568 / BM 3577 / RP62A).